Reading from the N-terminus, the 361-residue chain is Polygalacturonase (361 aa).

The signal sequence occupies residues 1-18 (MISANSLLISTLCAFAIA). A disulfide bridge connects residues Cys27 and Cys43. 5 PbH1 repeats span residues 155–185 (CSDLTISDITIDIRDGDSAGGHNTDGFDVGS), 186–207 (SSNVLIQGCTVYNQDDCIAVNS), 208–228 (GSTIKFMNNYCYNGHGISVGS), 237–258 (VNGFWAENNHVINSDNGLRIKT), and 266–288 (VTNVNFISNKISGIKSYGIVIEG). The active-site Proton donor is the Asp200. Cysteines 202 and 218 form a disulfide. His222 is a catalytic residue. Asn318 and Asn330 each carry an N-linked (GlcNAc...) asparagine glycan. The cysteines at positions 350 and 361 are disulfide-linked.

It belongs to the glycosyl hydrolase 28 family.

The catalysed reaction is (1,4-alpha-D-galacturonosyl)n+m + H2O = (1,4-alpha-D-galacturonosyl)n + (1,4-alpha-D-galacturonosyl)m.. This is Polygalacturonase (PGU1) from Saccharomyces cerevisiae (strain ATCC 204508 / S288c) (Baker's yeast).